We begin with the raw amino-acid sequence, 137 residues long: Putative FERT-1 protein (137 aa).

This chain is Putative FERT-1 protein (FERT-1), found in Ascaris suum (Pig roundworm).